A 205-amino-acid chain; its full sequence is High frequency lysogenization protein HflD homolog (205 aa).

Belongs to the HflD family.

Its subcellular location is the cytoplasm. It is found in the cell inner membrane. This is High frequency lysogenization protein HflD homolog from Aliivibrio fischeri (strain ATCC 700601 / ES114) (Vibrio fischeri).